We begin with the raw amino-acid sequence, 227 residues long: 2,3-bisphosphoglycerate-dependent phosphoglycerate mutase (227 aa).

Residues 7–14 (RHGFSEWN), 20–21 (TG), R59, 86–89 (ERHY), K97, 113–114 (RR), and 182–183 (GN) each bind substrate. H8 acts as the Tele-phosphohistidine intermediate in catalysis. E86 acts as the Proton donor/acceptor in catalysis.

It belongs to the phosphoglycerate mutase family. BPG-dependent PGAM subfamily. As to quaternary structure, homodimer.

It carries out the reaction (2R)-2-phosphoglycerate = (2R)-3-phosphoglycerate. It functions in the pathway carbohydrate degradation; glycolysis; pyruvate from D-glyceraldehyde 3-phosphate: step 3/5. Functionally, catalyzes the interconversion of 2-phosphoglycerate and 3-phosphoglycerate. In Haemophilus influenzae (strain PittGG), this protein is 2,3-bisphosphoglycerate-dependent phosphoglycerate mutase.